The primary structure comprises 351 residues: Alcohol dehydrogenase 5 (351 aa).

Zn(2+) contacts are provided by C47, H70, C101, C104, C107, C115, and C183. NAD(+)-binding positions include 181–187 (GACGGLG), D205, K210, 272–274 (VGM), and R344.

The protein belongs to the zinc-containing alcohol dehydrogenase family. Zn(2+) serves as cofactor.

The enzyme catalyses a primary alcohol + NAD(+) = an aldehyde + NADH + H(+). The catalysed reaction is a secondary alcohol + NAD(+) = a ketone + NADH + H(+). The sequence is that of Alcohol dehydrogenase 5 (ADH5) from Saccharomyces pastorianus (Lager yeast).